The following is a 68-amino-acid chain: U-poneritoxin(01)-Om4a (68 aa).

Positions 1–25 (MKPSSLTLAFLVVFMMAIMYNSVQA) are cleaved as a signal peptide. A propeptide spanning residues 26-39 (EALADADAEAFAEA) is cleaved from the precursor.

This sequence belongs to the formicidae venom precursor-01 superfamily. In terms of assembly, homo- or heterodimer with PLP7 (AC A0A348G6I9); disulfide-linked. Post-translationally, truncated sequences of this peptide have also been found in the venom. It is possible they have been cleaved in the venom. In terms of tissue distribution, expressed by the venom gland.

It is found in the secreted. This homodimer composed of two cationic amphipathic alpha-helical peptides has antimicrobial activities against E.coli (MIC=3.1 uM), S.aureus (MIC=3.1 uM), and S.cerevisiae (MIC=3.1 uM). It also shows histamine-releasing activity (66.4% at 10 uM) and a weak hemolytic activity (10.5% at 50 uM). This chain is U-poneritoxin(01)-Om4a, found in Odontomachus monticola (Trap-jaw ant).